The primary structure comprises 139 residues: Endocuticle structural glycoprotein SgAbd-8 (139 aa).

Glutamine 1 carries the pyrrolidone carboxylic acid modification. O-linked (HexNAc...) threonine glycosylation occurs at threonine 14. Serine 15 carries an O-linked (HexNAc...) serine glycan. The region spanning 29–99 (DGSYAWSYET…PEGAHLPTPP (71 aa)) is the Chitin-binding type R&amp;R domain. A glycan (O-linked (HexNAc...) threonine) is linked at threonine 97. Residues 111–139 (FIASQPQQPGNNGGGQFPRPQPFPRPGAF) form a disordered region. Positions 129 to 139 (RPQPFPRPGAF) are enriched in pro residues.

Its function is as follows. Component of the abdominal endocuticle. The chain is Endocuticle structural glycoprotein SgAbd-8 from Schistocerca gregaria (Desert locust).